Here is an 842-residue protein sequence, read N- to C-terminus: Microcephalin (842 aa).

The region spanning 1-93 is the BRCT 1 domain; the sequence is MAAPILKDVV…AHIDESLFPA (93 aa). Phosphoserine occurs at positions 279, 287, 296, and 333. Thr-335 bears the Phosphothreonine mark. The segment covering 346–359 has biased composition (basic residues); it reads HSRPRSSSVKRKRV. Disordered stretches follow at residues 346–375, 418–443, and 563–624; these read HSRP…KRKR, PDNL…AQFS, and VGLK…PTRR. Polar residues-rich tracts occupy residues 434–443 and 566–582; these read QLPSNPAQFS and KSTQ…NSSE. The segment covering 586–608 has biased composition (basic and acidic residues); sequence PSEHEPRSVVDCNVERSAEEKEN. BRCT domains lie at 647 to 737 and 758 to 840; these read SGKG…PFEL and YRGT…NYLL.

Interacts with CDC27 and maybe other components of the APC/C complex. Interacts with histone variant H2AX under DNA damage conditions.

The protein resides in the cytoplasm. Its subcellular location is the cytoskeleton. It is found in the microtubule organizing center. The protein localises to the centrosome. Its function is as follows. Implicated in chromosome condensation and DNA damage induced cellular responses. May play a role in neurogenesis and regulation of the size of the cerebral cortex. The polypeptide is Microcephalin (Macaca fascicularis (Crab-eating macaque)).